A 95-amino-acid polypeptide reads, in one-letter code: Aspartyl/glutamyl-tRNA(Asn/Gln) amidotransferase subunit C (95 aa).

The protein belongs to the GatC family. In terms of assembly, heterotrimer of A, B and C subunits.

It carries out the reaction L-glutamyl-tRNA(Gln) + L-glutamine + ATP + H2O = L-glutaminyl-tRNA(Gln) + L-glutamate + ADP + phosphate + H(+). The catalysed reaction is L-aspartyl-tRNA(Asn) + L-glutamine + ATP + H2O = L-asparaginyl-tRNA(Asn) + L-glutamate + ADP + phosphate + 2 H(+). Its function is as follows. Allows the formation of correctly charged Asn-tRNA(Asn) or Gln-tRNA(Gln) through the transamidation of misacylated Asp-tRNA(Asn) or Glu-tRNA(Gln) in organisms which lack either or both of asparaginyl-tRNA or glutaminyl-tRNA synthetases. The reaction takes place in the presence of glutamine and ATP through an activated phospho-Asp-tRNA(Asn) or phospho-Glu-tRNA(Gln). This is Aspartyl/glutamyl-tRNA(Asn/Gln) amidotransferase subunit C from Rhizobium etli (strain CIAT 652).